The chain runs to 212 residues: Negative modulator of initiation of replication (212 aa).

2 interaction with DNA regions span residues 113 to 114 (AV) and 144 to 148 (RTRVY).

This sequence belongs to the SeqA family. In terms of assembly, homodimer. Polymerizes to form helical filaments.

It is found in the cytoplasm. Its function is as follows. Negative regulator of replication initiation, which contributes to regulation of DNA replication and ensures that replication initiation occurs exactly once per chromosome per cell cycle. Binds to pairs of hemimethylated GATC sequences in the oriC region, thus preventing assembly of replication proteins and re-initiation at newly replicated origins. Repression is relieved when the region becomes fully methylated. The protein is Negative modulator of initiation of replication of Actinobacillus succinogenes (strain ATCC 55618 / DSM 22257 / CCUG 43843 / 130Z).